The chain runs to 473 residues: MTQDISEKIEVISINDSQPEDSSPVVPHERQVVDCVIEIWKEDPSTESLGMSKLHALVKQKHPNWSISEKRVRSLLKQFGLAFNNQEQFTYAKEITSVMTPDIELPANVHIIMTSKRGKGLYAKRDIAKGDLIWSEEPLFFIPPLANVNLMKTASACTYCGKLLQRTESATVLKGLDCNVCSEVWCSIKCKHLDGNLHSLLKHNLYNPGSKKHKLIDAEAFLELQDYCLEEQWNALYAITLIYANCITDKSGVKQKQFDAMARVSQDVRYKALNSSAGTFDSLNGGALFVQEQQEHLWKIGYEKFLRVFPKKPVEYREFLFMMGTYNINNLDSNVFLTQSHLNHNCASNTSVETELNRTAGLKVIAGRDIKSGEELTTTYVNPSHTVHQRQRELRVNWGFICACAKCKDDLKQNERRKSSHNQQQNANNIRDMLKETKDAVGEEGIELEIPTEFNGERRKSVRFDEKVVAVKE.

Residues 107 to 381 enclose the SET domain; sequence ANVHIIMTSK…SGEELTTTYV (275 aa).

Belongs to the class V-like SAM-binding methyltransferase superfamily. Histone-lysine methyltransferase family. SET5 subfamily.

The protein resides in the nucleus. Its subcellular location is the chromosome. It localises to the cytoplasm. It catalyses the reaction L-lysyl-[histone] + S-adenosyl-L-methionine = N(6)-methyl-L-lysyl-[histone] + S-adenosyl-L-homocysteine + H(+). Histone methyltransferase that monomethylates 'Lys-5', 'Lys-8' and 'Lys-12' of histone H4 (H4K5me1, H4K8me1 and H4K12me1, respectively), thereby controlling gene expression and remodeling chromatin structures. This Candida albicans (strain SC5314 / ATCC MYA-2876) (Yeast) protein is Histone-lysine N-methyltransferase SET5 (SET5).